A 507-amino-acid chain; its full sequence is Cobyric acid synthase (507 aa).

Residues 259-456 form the GATase cobBQ-type domain; it reads EIQIAVIKLP…LHGIFDNGTW (198 aa). C340 acts as the Nucleophile in catalysis. Residue H448 is part of the active site.

It belongs to the CobB/CobQ family. CobQ subfamily.

The protein operates within cofactor biosynthesis; adenosylcobalamin biosynthesis. In terms of biological role, catalyzes amidations at positions B, D, E, and G on adenosylcobyrinic A,C-diamide. NH(2) groups are provided by glutamine, and one molecule of ATP is hydrogenolyzed for each amidation. This Prochlorococcus marinus (strain SARG / CCMP1375 / SS120) protein is Cobyric acid synthase.